Here is a 293-residue protein sequence, read N- to C-terminus: Ribosomal protein L11 methyltransferase (293 aa).

Residues threonine 145, glycine 166, aspartate 188, and asparagine 230 each contribute to the S-adenosyl-L-methionine site.

This sequence belongs to the methyltransferase superfamily. PrmA family.

Its subcellular location is the cytoplasm. It catalyses the reaction L-lysyl-[protein] + 3 S-adenosyl-L-methionine = N(6),N(6),N(6)-trimethyl-L-lysyl-[protein] + 3 S-adenosyl-L-homocysteine + 3 H(+). In terms of biological role, methylates ribosomal protein L11. This Shewanella halifaxensis (strain HAW-EB4) protein is Ribosomal protein L11 methyltransferase.